Reading from the N-terminus, the 135-residue chain is PTS system sorbose-specific EIIA component (135 aa).

The PTS EIIA type-4 domain occupies 1–131 (MVHAIFCAHG…CVVWQQPETV (131 aa)). Residue His9 is the Tele-phosphohistidine intermediate of the active site. The residue at position 9 (His9) is a Phosphohistidine; by HPr.

The protein localises to the cytoplasm. Its function is as follows. The phosphoenolpyruvate-dependent sugar phosphotransferase system (PTS), a major carbohydrate active transport system, catalyzes the phosphorylation of incoming sugar substrates concomitant with their translocation across the cell membrane. The enzyme II SorABFM PTS system is involved in L-sorbose transport. The polypeptide is PTS system sorbose-specific EIIA component (Klebsiella pneumoniae).